The following is a 192-amino-acid chain: GTP cyclohydrolase-2 (192 aa).

Arginine 50–glutamate 54 lines the GTP pocket. Residues cysteine 55, cysteine 66, and cysteine 68 each coordinate Zn(2+). Residues glutamate 92–arginine 94 and threonine 114 each bind GTP. Aspartate 126 (proton acceptor) is an active-site residue. Arginine 128 (nucleophile) is an active-site residue. 2 residues coordinate GTP: threonine 149 and lysine 154.

Belongs to the GTP cyclohydrolase II family. Zn(2+) serves as cofactor.

It carries out the reaction GTP + 4 H2O = 2,5-diamino-6-hydroxy-4-(5-phosphoribosylamino)-pyrimidine + formate + 2 phosphate + 3 H(+). It functions in the pathway cofactor biosynthesis; riboflavin biosynthesis; 5-amino-6-(D-ribitylamino)uracil from GTP: step 1/4. Functionally, catalyzes the conversion of GTP to 2,5-diamino-6-ribosylamino-4(3H)-pyrimidinone 5'-phosphate (DARP), formate and pyrophosphate. This chain is GTP cyclohydrolase-2, found in Helicobacter pylori (strain P12).